The chain runs to 547 residues: Riboflavin transporter RibJ (547 aa).

The Cytoplasmic portion of the chain corresponds to 1 to 11; the sequence is MLPSFTRKPAD. A helical transmembrane segment spans residues 12-32; sequence HPIGYLVALSGLLMQLMSYGI. Over 33 to 58 the chain is Extracellular; that stretch reads DNSYSIFSEDMHNDPSLGFPSITAIS. The chain crosses the membrane as a helical span at residues 59 to 79; sequence LGNSVSLGLSPAFGVLAGFCV. Residues 80–85 are Cytoplasmic-facing; sequence DRLPPR. A helical membrane pass occupies residues 86–106; the sequence is FMMALSTILLFTGLWISSTLA. Residues 107–108 lie on the Extracellular side of the membrane; sequence AN. Residues 109-129 traverse the membrane as a helical segment; sequence IYVVTFTYCLFASIGTACMLS. Topologically, residues 130–144 are cytoplasmic; it reads PGAAATSSWFNRYQG. Residues 145 to 165 form a helical membrane-spanning segment; that stretch reads LAMGINFAGGGIGSAIIPPLA. The Extracellular portion of the chain corresponds to 166–175; that stretch reads GKWVVAYGWR. A helical transmembrane segment spans residues 176 to 196; that stretch reads KAFQLMSIFCAIGVLATALSA. Residues 197-344 lie on the Cytoplasmic side of the membrane; it reads RRREPKRDDS…MFTLPFMGNF (148 aa). Residues 198 to 293 are disordered; it reads RREPKRDDSS…EGLDVTEQSQ (96 aa). Residues 244–255 are compositionally biased toward basic and acidic residues; sequence NEGKEDVREMGR. A helical transmembrane segment spans residues 345 to 365; sequence LCWFIYSWAFYSLIYAAVPYI. Residues 366-386 are Extracellular-facing; the sequence is SSMGKPGTVYAGVPPIPTDVA. A helical transmembrane segment spans residues 387-407; the sequence is ATLFTFYGVFQVVGSVLVGWL. The Cytoplasmic portion of the chain corresponds to 408 to 412; the sequence is ASLVT. Residues 413–433 form a helical membrane-spanning segment; it reads AEFAYVFCATVGGIGCGLLAL. Topologically, residues 434 to 437 are extracellular; the sequence is GRSY. Residues 438 to 458 traverse the membrane as a helical segment; the sequence is VAFALLLCIIGFCMAGMFAVM. Topologically, residues 459–470 are cytoplasmic; the sequence is PTLIATHLYGPN. A helical membrane pass occupies residues 471 to 491; the sequence is LGFYFGAVFLAGVVGGFVAPP. The Extracellular segment spans residues 492–505; the sequence is MQATIQLRNNGSYA. Residue asparagine 501 is glycosylated (N-linked (GlcNAc...) asparagine). A helical membrane pass occupies residues 506-526; that stretch reads FVCVVMSVSMTLSALVCYATL. Residues 527–547 are Cytoplasmic-facing; the sequence is WRSKRSGIVLAARKTKLVEIM.

The protein belongs to the major facilitator superfamily. RibJ family.

It is found in the cell membrane. In terms of biological role, transporter involved in riboflavin (vitamin B2) uptake. Also transports FMN and FAD. This Trypanosoma brucei brucei (strain 927/4 GUTat10.1) protein is Riboflavin transporter RibJ.